The following is a 962-amino-acid chain: Protease 3 (962 aa).

An N-terminal signal peptide occupies residues 1–23; sequence MPRSTWFKALLLLVALWAPLSQA. Position 88 (histidine 88) interacts with Zn(2+). The Proton acceptor role is filled by glutamate 91. Zn(2+) contacts are provided by histidine 92 and glutamate 169.

This sequence belongs to the peptidase M16 family. In terms of assembly, monomer. Requires Zn(2+) as cofactor.

It localises to the periplasm. It carries out the reaction Preferential cleavage of 16-Tyr-|-Leu-17 and 25-Phe-|-Tyr-26 bonds of oxidized insulin B chain. Also acts on other substrates of Mw less than 7 kDa such as insulin and glucagon.. Its function is as follows. Endopeptidase that degrades small peptides of less than 7 kDa, such as glucagon and insulin. The protein is Protease 3 (ptrA) of Escherichia coli (strain K12).